The primary structure comprises 339 residues: Basic membrane protein A (339 aa).

The N-terminal stretch at 1 to 17 (MNKILLLILLESIVFLS) is a signal peptide. C18 is lipidated: N-palmitoyl cysteine. Residue C18 is the site of S-diacylglycerol cysteine attachment.

Belongs to the BMP lipoprotein family. As to quaternary structure, monomer.

The protein resides in the cell inner membrane. In terms of biological role, immunogenic protein. May be part of an ABC-type nucleoside uptake system involved in the purine salvage pathway. The polypeptide is Basic membrane protein A (bmpA) (Borreliella burgdorferi (strain ATCC 35210 / DSM 4680 / CIP 102532 / B31) (Borrelia burgdorferi)).